The primary structure comprises 173 residues: uncharacterized protein (173 aa).

A compositionally biased stretch (basic and acidic residues) spans M1–K11. A disordered region spans residues M1–Y173. The segment covering F17–I41 has biased composition (polar residues). Basic and acidic residues-rich tracts occupy residues K56–N109 and A120–K144. The segment covering K145–K156 has biased composition (basic residues). Positions N157 to Y173 are enriched in basic and acidic residues.

This is an uncharacterized protein from Caenorhabditis elegans.